The sequence spans 1014 residues: Calcium-transporting ATPase 2, plasma membrane-type (1014 aa).

Methionine 1 bears the N-acetylmethionine mark. At 1 to 160 (MESYLNENFD…NKFAESEMRG (160 aa)) the chain is on the cytoplasmic side. An interaction with calmodulin region spans residues 20 to 31 (VLEKWRNLCGVV). A Phosphoserine; by CPK1 modification is found at serine 45. A helical transmembrane segment spans residues 161–181 (FWVFVWEALQDMTLMILGVCA). Over 182 to 199 (FVSLIVGIATEGWPKGSH) the chain is Lumenal. The chain crosses the membrane as a helical span at residues 200–220 (DGLGIAASILLVVFVTATSDY). Over 221–348 (RQSLQFRDLD…DDETPLQVKL (128 aa)) the chain is Cytoplasmic. The chain crosses the membrane as a helical span at residues 349-368 (NGVATIIGKIGLFFAVVTFA). At 369–398 (VLVQGMFMRKLSTGTHWVWSGDEALELLEY) the chain is on the lumenal side. The chain crosses the membrane as a helical span at residues 399–416 (FAIAVTIVVVAVPEGLPL). At 417 to 810 (AVTLSLAFAM…KWGRSVYINI (394 aa)) the chain is on the cytoplasmic side. The active-site 4-aspartylphosphate intermediate is the aspartate 454. Mg(2+) contacts are provided by aspartate 755 and aspartate 759. The helical transmembrane segment at 811 to 829 (QKFVQFQLTVNVVALVVNF) threads the bilayer. The Lumenal segment spans residues 830-840 (SSACLTGSAPL). The chain crosses the membrane as a helical span at residues 841–861 (TAVQLLWVNMIMDTLGALALA). At 862-881 (TEPPNDELMKRLPVGRRGNF) the chain is on the cytoplasmic side. A helical transmembrane segment spans residues 882 to 904 (ITNAMWRNILGQAVYQFIVIWIL). The Lumenal segment spans residues 905-916 (QAKGKAMFGLDG). The chain crosses the membrane as a helical span at residues 917–938 (PDSTLMLNTLIFNCFVFCQVFN). The Cytoplasmic portion of the chain corresponds to 939 to 956 (EISSREMEEIDVFKGILD). A helical membrane pass occupies residues 957 to 978 (NYVFVVVIGATVFFQIIIIEFL). Residues 979 to 988 (GTFASTTPLT) are Lumenal-facing. The helical transmembrane segment at 989–1010 (ITQWIFSIFIGFLGMPIAAGLK) threads the bilayer. At 1011–1014 (TIPV) the chain is on the cytoplasmic side.

It belongs to the cation transport ATPase (P-type) (TC 3.A.3) family. Type IIB subfamily.

It is found in the endoplasmic reticulum membrane. The catalysed reaction is Ca(2+)(in) + ATP + H2O = Ca(2+)(out) + ADP + phosphate + H(+). Its activity is regulated as follows. Activated by calmodulin. Its function is as follows. This magnesium-dependent enzyme catalyzes the hydrolysis of ATP coupled with the translocation of calcium from the cytosol into the endoplasmic reticulum. This Arabidopsis thaliana (Mouse-ear cress) protein is Calcium-transporting ATPase 2, plasma membrane-type (ACA2).